Here is an 88-residue protein sequence, read N- to C-terminus: Large ribosomal subunit protein eL37 (88 aa).

The disordered stretch occupies residues 1–24; the sequence is MTKGTTSFGKRHNKSHTQCRRCGR. Basic residues predominate over residues 9-24; sequence GKRHNKSHTQCRRCGR. Zn(2+)-binding residues include Cys-19, Cys-22, Cys-34, and Cys-37. A C4-type zinc finger spans residues 19 to 37; the sequence is CRRCGRKSYHIQKKTCSSC.

It belongs to the eukaryotic ribosomal protein eL37 family. It depends on Zn(2+) as a cofactor.

Functionally, binds to the 23S rRNA. In Schistosoma mansoni (Blood fluke), this protein is Large ribosomal subunit protein eL37 (RPL37).